Here is a 262-residue protein sequence, read N- to C-terminus: Hydroxyethylthiazole kinase (262 aa).

Position 44 (Met-44) interacts with substrate. ATP contacts are provided by Arg-118 and Thr-166. Gly-193 is a substrate binding site.

Belongs to the Thz kinase family. Mg(2+) is required as a cofactor.

It catalyses the reaction 5-(2-hydroxyethyl)-4-methylthiazole + ATP = 4-methyl-5-(2-phosphooxyethyl)-thiazole + ADP + H(+). It participates in cofactor biosynthesis; thiamine diphosphate biosynthesis; 4-methyl-5-(2-phosphoethyl)-thiazole from 5-(2-hydroxyethyl)-4-methylthiazole: step 1/1. In terms of biological role, catalyzes the phosphorylation of the hydroxyl group of 4-methyl-5-beta-hydroxyethylthiazole (THZ). The polypeptide is Hydroxyethylthiazole kinase (Chlamydia caviae (strain ATCC VR-813 / DSM 19441 / 03DC25 / GPIC) (Chlamydophila caviae)).